Consider the following 1969-residue polypeptide: Echinoderm microtubule-associated protein-like 5 (1969 aa).

WD repeat units follow at residues 59 to 100, 104 to 145, 148 to 187, 195 to 233, 235 to 273, 280 to 321, 323 to 362, 406 to 445, 449 to 488, and 561 to 601; these read GHSD…TISV, VHTH…MLSM, GHTDRIFDISWDLYQPNKLVSCGVKHIKFWSLCGNALTPK, GDLQTILCLACARDELTYSGALNGDIYVWKGINLIRTIQ, AHAAGIFSMNACEEGFATGGRDGCIRLWDLTFKPITVID, GYKG…LIMQ, HCEGELWALAVHPTKPLAVTGSDDRSVRIWSLVDHALIAR, DRKEAIHELKYSPDGTYLAVGCNDSSVDIYGVAQRYKKVG, GSLSFITHLDWSSDSRYLQTNDGNGKRLFYRMPGGKEVTS, and GHSA…KLKD. The segment at 609–633 is disordered; sequence ESLADSHSDESDSDLSDVPELDSEI. Residues 619–633 are compositionally biased toward acidic residues; that stretch reads SDSDLSDVPELDSEI. WD repeat units lie at residues 725-766, 770-811, 814-853, 861-900, 901-940, 996-1035, 1038-1077, 1080-1120, and 1236-1276; these read GHDD…PLSI, HHQY…KLSI, GSKDKIFVVKMNPYVPDKLITAGIKHMKFWRKAGGGLIGR, GKNDTMMCAVYGWTEEMAFSGTSTGDVCIWRDIFLVKTVK, AHDGPVFSMHALEKGFVTGGKDGIVALWDDSFERCLKTYA, HMEGEVWGLATHPYLPICATVSDDKTLRIWDLSPSHCMLA, KLKKGGRCCCFSPDGKALAVGLNDGSFLMANADTLEDLVS, HRKD…RVGI, and AHST…YREK. 2 disordered regions span residues 1274-1297 and 1326-1355; these read REKRPCDSEESDIDSEEDGGYDSD and QQKEPSIDERPPVSRAPPQPEKLQTNNVGK. A compositionally biased stretch (acidic residues) spans 1281–1294; the sequence is SEESDIDSEEDGGY. The segment covering 1326 to 1337 has biased composition (basic and acidic residues); the sequence is QQKEPSIDERPP. 10 WD repeats span residues 1412–1463, 1467–1508, 1511–1550, 1560–1598, 1600–1646, 1691–1731, 1733–1774, 1775–1814, 1887–1926, and 1932–1969; these read EHND…TLSI, YHSK…KIAS, GHNQRIFVAEFRPDSDTQFVSVGVKHVKFWTLAGRALLSK, ARMQTMLAIAFGANNLTFTGTISGDVCVWKDHILCRIVA, AHNG…RAFR, GHVD…MLNK, NLGH…GKKR, DRRCAIHDIRFSPDSRYLAVGSSENSVDFYDLTLGPTLNR, AEKADVNCACVSHSGISLVTGDDFGMVKLFDFPCPEKFAK, and GHSPHVTNIRFTSGDRHVVSAGGDDCSLFVWKCVHTPH.

The protein belongs to the WD repeat EMAP family.

The protein localises to the cytoplasm. It localises to the cytoskeleton. Functionally, may modify the assembly dynamics of microtubules, such that microtubules are slightly longer, but more dynamic. The chain is Echinoderm microtubule-associated protein-like 5 (EML5) from Homo sapiens (Human).